A 474-amino-acid chain; its full sequence is MMGNMFGSSLASLFFLWATIQQIFPNHLKIAIKEFFLSTIQQISFAKRFSDKFINFFSPYVQINFSEYEDYRVNHAFDPIETYLGAKATDKAKHLRASQVRESKGLVLKRDETKVRDEYEGIRVWWEMETDSAGYKTLKLTFHRRSRDIVTNSYIKYVVEEGKSIDAKNKKMKLFTNNPSSHWGSSKTSFWRYIDFEHPATFETLAMDPKKKEQILNDLAAFNNGKDYYKKIGKAWKRGYLLYGPPGTGKSTMIAAMANLLNYSIYDLELTAIQNNSELRKILTATSNKSIIVIEDIDCSLDLTGKRKKKESNLMIWRKDGDQDNEENKSFVTLSGLLNFIDGIWSACGQERIIVFTTNHLAKLDPALIRRGRMDMHIELSYCTFEAFKTLAKNYLDLDSHPLFSKIESLMKETNIAPADVAENLMKKNRETDADGSLNDLIESLERKKKVQIAQVDEHKEYSNKIVEAFRKLF.

Residues 1–25 form the signal peptide; that stretch reads MMGNMFGSSLASLFFLWATIQQIFP. 244–251 provides a ligand contact to ATP; that stretch reads GPPGTGKS.

It belongs to the AAA ATPase family. BCS1 subfamily. It depends on Mg(2+) as a cofactor.

It catalyses the reaction ATP + H2O = ADP + phosphate + H(+). The polypeptide is AAA-ATPase At3g28610 (Arabidopsis thaliana (Mouse-ear cress)).